The following is a 247-amino-acid chain: MRIVYDDVRDLKNIVETLTKFIDEGLFEIGQDGIRLVAVDKAHVSLINIELYKELFKEYEVEDEFKFGFNSQYLAKILSIAKRKEEISIESDSPERVKITLGGALNRVFIINNIQVSPPEVPEVNLEFEVKASLSSKAFKTTINEISAVTDTVDIIAVEDKVILKGEGKEGSQIENEFSKDTGAISDMEFKNEAKSPYDVNYLSDILSLTNLSDYTRLAFSTEKPLELEFNMEGGGKVTYLLAPKLS.

It belongs to the PCNA family. In terms of assembly, homotrimer. The subunits circularize to form a toroid; DNA passes through its center. Replication factor C (RFC) is required to load the toroid on the DNA.

Functionally, sliding clamp subunit that acts as a moving platform for DNA processing. Responsible for tethering the catalytic subunit of DNA polymerase and other proteins to DNA during high-speed replication. The chain is DNA polymerase sliding clamp 1 from Sulfolobus acidocaldarius (strain ATCC 33909 / DSM 639 / JCM 8929 / NBRC 15157 / NCIMB 11770).